Reading from the N-terminus, the 404-residue chain is Propionate kinase (404 aa).

The protein belongs to the acetokinase family. PduW subfamily.

The protein localises to the cytoplasm. It catalyses the reaction propanoate + ATP = propanoyl phosphate + ADP. It participates in polyol metabolism; 1,2-propanediol degradation. Works with phosphate acetyltransferase (pta) to capture exogenous propionate and regenerate propionyl-CoA during degradation of 1,2-propanediol (1,2-PD). The chain is Propionate kinase from Escherichia fergusonii (strain ATCC 35469 / DSM 13698 / CCUG 18766 / IAM 14443 / JCM 21226 / LMG 7866 / NBRC 102419 / NCTC 12128 / CDC 0568-73).